A 432-amino-acid polypeptide reads, in one-letter code: Glutamyl-tRNA reductase (432 aa).

Substrate-binding positions include 49–52 (TCNR), Ser-101, 106–108 (ESQ), and Gln-112. The active-site Nucleophile is the Cys-50. 181–186 (GAGETI) is a binding site for NADP(+). Residues 410-432 (KPGYHHPTLQTTIVKTDETDPAS) are disordered.

Belongs to the glutamyl-tRNA reductase family. As to quaternary structure, homodimer.

The catalysed reaction is (S)-4-amino-5-oxopentanoate + tRNA(Glu) + NADP(+) = L-glutamyl-tRNA(Glu) + NADPH + H(+). It functions in the pathway porphyrin-containing compound metabolism; protoporphyrin-IX biosynthesis; 5-aminolevulinate from L-glutamyl-tRNA(Glu): step 1/2. Functionally, catalyzes the NADPH-dependent reduction of glutamyl-tRNA(Glu) to glutamate 1-semialdehyde (GSA). This is Glutamyl-tRNA reductase from Xylella fastidiosa (strain M23).